The primary structure comprises 760 residues: Catecholate siderophore receptor Fiu (760 aa).

A signal peptide spans 1–31 (MENNRNFPARQFHSLTFFAGLCIGITPVAQA). One can recognise a TBDR plug domain in the interval 67–175 (PVADTTRTMT…PTGSINMISK (109 aa)). One can recognise a TBDR beta-barrel domain in the interval 180–760 (DSGIDASASI…TFLLTANMHF (581 aa)). Positions 743-760 (RYHPGEPRTFLLTANMHF) match the TonB C-terminal box motif.

Belongs to the TonB-dependent receptor family.

Its subcellular location is the cell outer membrane. Involved in the active transport across the outer membrane of iron complexed with catecholate siderophores such as dihydroxybenzoylserine and dihydroxybenzoate. It derives its energy for transport by interacting with the trans-periplasmic membrane protein TonB. Can also transport catechol-substituted cephalosporins. Receptor for microcins M, H47 and E492. The chain is Catecholate siderophore receptor Fiu (fiu) from Escherichia coli (strain K12).